We begin with the raw amino-acid sequence, 282 residues long: 2-dehydro-3-deoxyphosphooctonate aldolase (282 aa).

This sequence belongs to the KdsA family.

It localises to the cytoplasm. It carries out the reaction D-arabinose 5-phosphate + phosphoenolpyruvate + H2O = 3-deoxy-alpha-D-manno-2-octulosonate-8-phosphate + phosphate. Its pathway is carbohydrate biosynthesis; 3-deoxy-D-manno-octulosonate biosynthesis; 3-deoxy-D-manno-octulosonate from D-ribulose 5-phosphate: step 2/3. It participates in bacterial outer membrane biogenesis; lipopolysaccharide biosynthesis. In Bordetella avium (strain 197N), this protein is 2-dehydro-3-deoxyphosphooctonate aldolase.